Reading from the N-terminus, the 513-residue chain is Xylose import ATP-binding protein XylG (513 aa).

ABC transporter domains lie at 5-242 (LEMK…VGRE) and 259-505 (LRIE…LRSE). 37 to 44 (GENGSGKS) contributes to the ATP binding site.

The protein belongs to the ABC transporter superfamily. Xylose importer (TC 3.A.1.2.4) family. In terms of assembly, the complex is composed of two ATP-binding proteins (XylG), two transmembrane proteins (XylH) and a solute-binding protein (XylF).

The protein localises to the cell inner membrane. The enzyme catalyses D-xylose(out) + ATP + H2O = D-xylose(in) + ADP + phosphate + H(+). Part of the ABC transporter complex XylFGH involved in xylose import. Responsible for energy coupling to the transport system. The polypeptide is Xylose import ATP-binding protein XylG (Escherichia coli (strain UTI89 / UPEC)).